The chain runs to 402 residues: UDP-N-acetylmuramoylalanine--D-glutamate ligase (402 aa).

Glycine 97 to threonine 103 provides a ligand contact to ATP.

This sequence belongs to the MurCDEF family.

The protein resides in the cytoplasm. It carries out the reaction UDP-N-acetyl-alpha-D-muramoyl-L-alanine + D-glutamate + ATP = UDP-N-acetyl-alpha-D-muramoyl-L-alanyl-D-glutamate + ADP + phosphate + H(+). It functions in the pathway cell wall biogenesis; peptidoglycan biosynthesis. Cell wall formation. Catalyzes the addition of glutamate to the nucleotide precursor UDP-N-acetylmuramoyl-L-alanine (UMA). The protein is UDP-N-acetylmuramoylalanine--D-glutamate ligase of Campylobacter jejuni (strain RM1221).